The primary structure comprises 790 residues: MAATTANPEMTSDVPSLGPNITSGNPGPAIQGGGTIVQRAVKRRPGLDFDDDGEGNSKFLRCDEDQMSNDKERFARSDDEQSSADKERLARENHSEIERRRRNKMTAYITELSDIVPTCSALARKPDKLTILRMAVSHMKSLRGTGNTSTDGSYKPSFLTDQELKHLILEAADGFLFIVSCETGRVVYVSDSVTPVLNQPQSEWFGSTLYDQVHPDDVDKLREQLSTSENALTGRILDLKTGTVKKEGQQSSMRMCMGSRRSFICRMRCGNSSVDPVSMNRLSFVRNRCRNGLGSVKDGEPHFVVVHCTGYIKAWPPAGVSLPDDDPEAGQGSKFCLVAIGRLQVTSSPNCTDMSNVCQPTEFISRHNIEGIFTFVDHRCVATVGYQPQELLGKNIVEFCHPEDQQLLRDSFQQVVKLKGQVLSVMFRFRSKNREWLWTRTSSFTFQNPYSDEIEYIICTNTNVKNSSQEPRPTLSNPIQRPQLGPTANLPLEVGSGQLAPRQQQQQTELDMVPGRDGLTNYNHSQISVQPVATTGPEHGKPLEKSDSLFAQDRDPRFSEMYSNINADQSKGISSSTVPATQQLFSQGNTFPPNPRPAENFRNSGLAPPVTIVQASASAGEMLAQISRHSNPTQGTAPTWTPSTRPGFSAQQVASQATTKSRSSQFGVGNFQSPSSFSSMSLSSTSTASSGAAAYPSLTSRGSNFAPETGQTAGQFQTRTAEGVGVWPQWQGQQPHHRSTSSEQHVQQPSTQQPNQPEVFQEMLSMLGDQSSSYNNEEFPDLTMFPSFSE.

The segment covering 1-25 has biased composition (polar residues); that stretch reads MAATTANPEMTSDVPSLGPNITSGN. Positions 1–98 are disordered; it reads MAATTANPEM…LARENHSEIE (98 aa). Ala-2 carries the post-translational modification N-acetylalanine. Residue Lys-58 forms a Glycyl lysine isopeptide (Lys-Gly) (interchain with G-Cter in SUMO2) linkage. The segment covering 60–98 has biased composition (basic and acidic residues); sequence LRCDEDQMSNDKERFARSDDEQSSADKERLARENHSEIE. Ser-77 bears the Phosphoserine mark. The interval 88-128 is DNA-binding; it reads RLARENHSEIERRRRNKMTAYITELSDIVPTCSALARKPDK. Residues 89 to 142 form the bHLH domain; it reads LARENHSEIERRRRNKMTAYITELSDIVPTCSALARKPDKLTILRMAVSHMKSL. A required for heterodimer formation with HIF1A region spans residues 112–168; sequence LSDIVPTCSALARKPDKLTILRMAVSHMKSLRGTGNTSTDGSYKPSFLTDQELKHLI. The required for heterodimer formation with EPAS1 stretch occupies residues 112–264; sequence LSDIVPTCSA…MCMGSRRSFI (153 aa). PAS domains are found at residues 161–235 and 349–419; these read DQEL…LTGR and PNCT…VKLK. Positions 167 to 171 are mediates the transcription activity and dimerization of the AHR:ARNT complex; the sequence is LILEA. The PAC domain maps to 424–467; it reads SVMFRFRSKNREWLWTRTSSFTFQNPYSDEIEYIICTNTNVKNS. 2 stretches are compositionally biased toward polar residues: residues 465–480 and 629–672; these read KNSS…NPIQ and HSNP…GNFQ. 3 disordered regions span residues 465–494, 629–695, and 729–790; these read KNSS…PLEV, HSNP…AAAY, and QWQG…SFSE. The span at 673 to 695 shows a compositional bias: low complexity; that stretch reads SPSSFSSMSLSSTSTASSGAAAY. The segment covering 741–758 has biased composition (polar residues); it reads SSEQHVQQPSTQQPNQPE.

As to quaternary structure, monomer. Homodimer only upon binding to a DNA. Efficient DNA binding requires dimerization with another bHLH protein. Interacts with TACC3. Interacts with HIF1A, EPAS1, NPAS1 and NPAS3; forms a heterodimer that binds core DNA sequence 5'-TACGTG-3' within the hypoxia response element (HRE) of target gene promoters. Forms a heterodimer with AHRR, as well as with other bHLH proteins. Interacts with NOCA7. Interacts with TACC3. Interacts with AHR; the heterodimer ARNT:AHR binds to core DNA sequence 5'-TGCGTG-3' within the dioxin response element (DRE) of target gene promoters and activates their transcription. Interacts with SIM1 and NPAS4. Was expressed at almost the same level in all tissues except for the heart, liver, and small intestine.

The protein localises to the nucleus. Required for activity of the AHR. Upon ligand binding, AHR translocates into the nucleus, where it heterodimerizes with ARNT and induces transcription by binding to xenobiotic response elements (XRE). Not required for the ligand-binding subunit to translocate from the cytosol to the nucleus after ligand binding. The complex initiates transcription of genes involved in the regulation of a variety of biological processes, including angiogenesis, hematopoiesis, drug and lipid metabolism, cell motility and immune modulation. The heterodimer binds to core DNA sequence 5'-TACGTG-3' within the hypoxia response element (HRE) of target gene promoters and functions as a transcriptional regulator of the adaptive response to hypoxia. The heterodimer ARNT:AHR binds to core DNA sequence 5'-TGCGTG-3' within the dioxin response element (DRE) of target gene promoters and activates their transcription. This Oryctolagus cuniculus (Rabbit) protein is Aryl hydrocarbon receptor nuclear translocator (ARNT).